The chain runs to 338 residues: Anthocyanidin reductase ((2S)-flavan-3-ol-forming) (338 aa).

Residues 18–21 (TGFV), K48, 87–90 (VATP), and Y168 contribute to the NADP(+) site.

The protein belongs to the NAD(P)-dependent epimerase/dehydratase family. Dihydroflavonol-4-reductase subfamily. Expressed in leaves and grape berries.

It carries out the reaction a (2S,3R)-flavan-3-ol + 2 NADP(+) = an anthocyanidin with a 3-hydroxy group + 2 NADPH + 2 H(+). It catalyses the reaction a (2S,3S)-flavan-3-ol + 2 NADP(+) = an anthocyanidin with a 3-hydroxy group + 2 NADPH + 2 H(+). It participates in secondary metabolite biosynthesis; flavonoid biosynthesis. In terms of biological role, produces the terminal flavan-3-ol monomers required for the formation of proanthocyanidins or condensed tannins in leaves and flowers, as well as in the skin and seeds of developing berries. Behaves as a reductase and as a C-3 epimerase. Catalyzes the double reduction of anthocyanidins, producing a mixture of (2S,3S)- and (2S,3R)-flavan-3-ols. The enzyme catalyzes sequential hydride transfers to C-2 and C-4, respectively and epimerization at C-3 is achieved by tautomerization that occurs between the two hydride transfers. Converts cyanidin, pelargonidin and delphinidin into catechin and epicatechin, afzelechin and epiafzelechin, and gallocatechin and epigallocatechin respectively. In Vitis vinifera (Grape), this protein is Anthocyanidin reductase ((2S)-flavan-3-ol-forming).